A 1615-amino-acid chain; its full sequence is Ras-responsive element-binding protein 1 (1615 aa).

The segment at 1 to 44 (MMSAVMNVGKIAENGGTSQTVKSPSKSPAPNRIGRRNQETKEEK) is disordered. Residues 15 to 28 (GGTSQTVKSPSKSP) are compositionally biased toward polar residues. 3 consecutive C2H2-type zinc fingers follow at residues 47-69 (YTCP…IRQH), 78-100 (HSCS…MLVH), and 106-128 (YKCS…MKIH). The disordered stretch occupies residues 127 to 169 (IHEKDPNSTASTTPPSPLKAKRLSSKRKFSQDAEMDREERTPA). A compositionally biased stretch (basic residues) spans 145 to 154 (KAKRLSSKRK). 3 C2H2-type zinc fingers span residues 189 to 211 (YHCP…METH), 216 to 239 (LRCD…AVIH), and 297 to 319 (FICE…TETH). The tract at residues 511–556 (SAQQASPGCISPSLPPPPLRLIKNSVETSSNSHLSQPGAKSSPSSQ) is disordered. Residues 535–549 (SVETSSNSHLSQPGA) are compositionally biased toward polar residues. 4 consecutive C2H2-type zinc fingers follow at residues 622–644 (YPCR…IRSH), 650–672 (YQCN…LRTH), 732–754 (TVCK…MRTH), and 763–788 (FECK…QHLH). Disordered stretches follow at residues 1025–1044 (AADA…KSGN), 1058–1104 (DSNL…VDLE), and 1123–1162 (KFSP…KRNT). Residues 1026 to 1036 (ADASPKAASSS) show a composition bias toward low complexity. Over residues 1082-1095 (TKKRGRKKGTKNKP) the composition is skewed to basic residues. Residues 1123-1132 (KFSPFLQSTD) show a composition bias toward polar residues. Residues 1170–1192 (ITCPYCPRVFSWASSLQRHMLTH) form a C2H2-type 11 zinc finger. Disordered stretches follow at residues 1214–1269 (CEKE…KSLD) and 1313–1418 (LSRH…DKRK). The segment covering 1242-1262 (PAEEDAEEKADEYEEGPEEDS) has biased composition (acidic residues). A C2H2-type 12 zinc finger spans residues 1298–1320 (HACDVCGKTFKFAGALSRHKKAH). 2 stretches are compositionally biased toward basic and acidic residues: residues 1321–1339 (IRED…KSIQ) and 1388–1414 (GTER…TAKA). 2 C2H2-type zinc fingers span residues 1419–1441 (KVCT…MRSH) and 1447–1469 (YKCQ…QRIH). The segment covering 1464 to 1477 (RHQRIHQKVKNTRN) has biased composition (basic residues). Positions 1464-1585 (RHQRIHQKVK…SELERPSGFI (122 aa)) are disordered. 2 stretches are compositionally biased toward basic and acidic residues: residues 1478–1493 (HGKE…RCGE) and 1566–1580 (PAKD…ELER).

It belongs to the krueppel C2H2-type zinc-finger protein family. Broadly expressed, except in brain.

The protein resides in the nucleus. Its function is as follows. Transcription factor that binds specifically to the RAS-responsive elements (RRE) of gene promoters. This Gallus gallus (Chicken) protein is Ras-responsive element-binding protein 1 (RREB1).